The chain runs to 166 residues: Cofilin-2 (166 aa).

Ala2 is subject to N-acetylalanine. The residue at position 3 (Ser3) is a Phosphoserine. Residues 4–153 (GVTVNDEVIK…KDRSTLGEKL (150 aa)) enclose the ADF-H domain. A Phosphothreonine modification is found at Thr6. Positions 30 to 34 (KKRKK) match the Nuclear localization signal motif.

It belongs to the actin-binding proteins ADF family. The phosphorylation of Ser-24 may prevent recognition of the nuclear localization signal.

Its subcellular location is the nucleus matrix. The protein localises to the cytoplasm. The protein resides in the cytoskeleton. Its function is as follows. Controls reversibly actin polymerization and depolymerization in a pH-sensitive manner. It has the ability to bind G- and F-actin in a 1:1 ratio of cofilin to actin. It is the major component of intranuclear and cytoplasmic actin rods. The chain is Cofilin-2 (CFL2) from Bos taurus (Bovine).